We begin with the raw amino-acid sequence, 319 residues long: Acetyl-coenzyme A carboxylase carboxyl transferase subunit alpha (319 aa).

Residues 39 to 296 (EINRLRSKSI…KTQLLLDLTE (258 aa)) form the CoA carboxyltransferase C-terminal domain.

It belongs to the AccA family. As to quaternary structure, acetyl-CoA carboxylase is a heterohexamer composed of biotin carboxyl carrier protein (AccB), biotin carboxylase (AccC) and two subunits each of ACCase subunit alpha (AccA) and ACCase subunit beta (AccD).

It localises to the cytoplasm. It carries out the reaction N(6)-carboxybiotinyl-L-lysyl-[protein] + acetyl-CoA = N(6)-biotinyl-L-lysyl-[protein] + malonyl-CoA. Its pathway is lipid metabolism; malonyl-CoA biosynthesis; malonyl-CoA from acetyl-CoA: step 1/1. Functionally, component of the acetyl coenzyme A carboxylase (ACC) complex. First, biotin carboxylase catalyzes the carboxylation of biotin on its carrier protein (BCCP) and then the CO(2) group is transferred by the carboxyltransferase to acetyl-CoA to form malonyl-CoA. The sequence is that of Acetyl-coenzyme A carboxylase carboxyl transferase subunit alpha from Blochmanniella pennsylvanica (strain BPEN).